A 722-amino-acid chain; its full sequence is Glycine--tRNA ligase beta subunit (722 aa).

This sequence belongs to the class-II aminoacyl-tRNA synthetase family. As to quaternary structure, tetramer of two alpha and two beta subunits.

It is found in the cytoplasm. The enzyme catalyses tRNA(Gly) + glycine + ATP = glycyl-tRNA(Gly) + AMP + diphosphate. The polypeptide is Glycine--tRNA ligase beta subunit (Haemophilus influenzae (strain 86-028NP)).